The chain runs to 249 residues: Proteasome subunit alpha type-7-1A (249 aa).

The protein belongs to the peptidase T1A family. As to quaternary structure, the 26S proteasome consists of a 20S proteasome core and two 19S regulatory subunits. The 20S proteasome core is composed of 28 subunits that are arranged in four stacked rings, resulting in a barrel-shaped structure. The two end rings are each formed by seven alpha subunits, and the two central rings are each formed by seven beta subunits. The catalytic chamber with the active sites is on the inside of the barrel. Testis specific.

It is found in the cytoplasm. Its subcellular location is the nucleus. The proteasome is a multicatalytic proteinase complex which is characterized by its ability to cleave peptides with Arg, Phe, Tyr, Leu, and Glu adjacent to the leaving group at neutral or slightly basic pH. The proteasome has an ATP-dependent proteolytic activity. This Drosophila melanogaster (Fruit fly) protein is Proteasome subunit alpha type-7-1A (Prosalpha4T1).